A 359-amino-acid chain; its full sequence is Protein-L-isoaspartate O-methyltransferase domain-containing protein 2 (359 aa).

Gly2 is lipidated: N-myristoyl glycine. Residue Ser64 is part of the active site. 3 adoMet binding motif regions span residues 85–94 (LNLGSGTGYL), 160–164 (YDRVY), and 181–191 (LKVGGILVMPL). A BC-box region spans residues 240–250 (VRSLQDLARLA). Residues 301 to 328 (SNPSDDTSCEDAEEDRREVAERTLQETK) form a disordered region. A compositionally biased stretch (basic and acidic residues) spans 314–328 (EDRREVAERTLQETK). Positions 343–346 (LPLP) are CUL-box.

This sequence belongs to the methyltransferase superfamily. L-isoaspartyl/D-aspartyl protein methyltransferase family.

The protein resides in the cytoplasm. In terms of biological role, may act as a substrate recognition component of an ECS (Elongin BC-CUL5-SOCS-box protein) E3 ubiquitin ligase complex which mediates the ubiquitination and subsequent proteasomal degradation of target proteins. May bind to the methyltransferase cofactor S-adenosylmethionine (AdoMet) via the N-terminal AdoMet binding motif, but probably does not display methyltransferase activity. The sequence is that of Protein-L-isoaspartate O-methyltransferase domain-containing protein 2 (Pcmtd2) from Mus musculus (Mouse).